A 675-amino-acid polypeptide reads, in one-letter code: Protein PALS1 (675 aa).

2 disordered regions span residues 1–34 and 51–78; these read MTTS…KHRE and RRSA…KKQE. A required for the correct localization of PALS1 and PATJ at cell-cell contacts and the normal formation of tight junctions and adherens junctions region spans residues 1-345; that stretch reads MTTSHMNGHV…QQIKPPPAKE (345 aa). Composition is skewed to basic and acidic residues over residues 10 to 34 and 54 to 78; these read VTEE…KHRE and AQLE…KKQE. Phosphoserine is present on residues Ser14 and Ser25. The interval 21–140 is interaction with PARD6B; it reads VDLASPEEHQ…LKHIQHTLID (120 aa). Phosphoserine occurs at positions 83 and 84. L27 domains lie at 120-177 and 179-235; these read KILE…NKAS and PFPL…MQLE. The interval 181–243 is interaction with LIN7C; sequence PLISNAQDLA…LEPITDERVY (63 aa). The PDZ domain maps to 256–336; that stretch reads IVRIEKARDI…TLTFVLIPSQ (81 aa). The SH3 domain maps to 345 to 417; it reads ETVIHVKAHF…PGKSFQQQRE (73 aa). The Guanylate kinase-like domain maps to 479-660; that stretch reads KRPIILIGPQ…AYQELLRLIN (182 aa). Residue 486–493 participates in ATP binding; that stretch reads GPQNCGQN.

The protein belongs to the MAGUK family. Heterodimer with MPP1. Forms a heterotrimeric complex composed of PALS1, LIN7B and PATJ; the N-terminal L27 domain of PALS1 interacts with the L27 domain of PATJ and the C-terminal L27 domain of PALS1 interacts with the L27 domain of LIN7B. Component of a complex composed of PALS1, CRB1 and MPP4. Component of a complex whose core is composed of ARHGAP17, AMOT, PALS1, PATJ and PARD3/PAR3. Component of a complex composed of PALS1, CRB1 and EPB41L5. Within the complex, interacts (via HOOK domain) with EPB41L5 (via FERM domain), and interacts with CRB1 (via intracellular domain). Component of a complex composed of PALS1, MPP3 and CRB1; PALS1 acts as a bridging protein between MPP3 (via guanylate kinase-like domain) and CRB1. Component of a complex composed of CRB3, PALS1 and PATJ. As part of the Crumbs complex; interacts with WWP1, the interaction is enhanced by AMOTL2 and facilitates WWP1 localization to the plasma membrane. The Crumbs complex promotes monoubiquitination of AMOTL2 by WWP1, which activates the Hippo signaling pathway. Interacts (via PDZ domain) with PATJ (via N-terminus). Interacts with EZR. Interacts (via PDZ domain) with CRB1 (via C-terminal ERLI motif). While the PDZ domain is sufficient for interaction with CRB1, the adjacent SH3 and guanylate kinase-like domains are likely to contribute to a high affinity interaction. Interacts with WWTR1/TAZ (via WW domain). Interacts with MPP7. Interacts (via PDZ domain) with CRB3 (via C-terminus). Interacts with LIN7C. Interacts with MPDZ. Interacts with PARD6B. Interacts with SC6A1. Interacts with CDH5; the interaction promotes PALS1 localization to cell junctions and is required for CDH5-mediated vascular lumen formation and endothelial cell. Interacts with NPHP1 (via coiled coil and SH3 domains). Interacts with NPHP4. Interacts with CRB2.

Its subcellular location is the golgi apparatus. It is found in the cell membrane. The protein resides in the endomembrane system. The protein localises to the cell junction. It localises to the tight junction. Its subcellular location is the adherens junction. It is found in the cell projection. The protein resides in the axon. The protein localises to the perikaryon. It localises to the apical cell membrane. Functionally, plays a role in tight junction biogenesis and in the establishment of cell polarity in epithelial cells. Also involved in adherens junction biogenesis by ensuring correct localization of the exocyst complex protein EXOC4/SEC8 which allows trafficking of adherens junction structural component CDH1 to the cell surface. Plays a role through its interaction with CDH5 in vascular lumen formation and endothelial membrane polarity. Required during embryonic and postnatal retinal development. Required for the maintenance of cerebellar progenitor cells in an undifferentiated proliferative state, preventing premature differentiation, and is required for cerebellar histogenesis, fissure formation, cerebellar layer organization and cortical development. Plays a role in neuronal progenitor cell survival, potentially via promotion of mTOR signaling. Plays a role in the radial and longitudinal extension of the myelin sheath in Schwann cells. May modulate SC6A1/GAT1-mediated GABA uptake by stabilizing the transporter. May play a role in the T-cell receptor-mediated activation of NF-kappa-B. Required for localization of EZR to the apical membrane of parietal cells and may play a role in the dynamic remodeling of the apical cytoskeleton. Required for the normal polarized localization of the vesicular marker STX4. Required for the correct trafficking of the myelin proteins PMP22 and MAG. Involved in promoting phosphorylation and cytoplasmic retention of transcriptional coactivators YAP1 and WWTR1/TAZ which leads to suppression of TGFB1-dependent transcription of target genes such as CCN2/CTGF, SERPINE1/PAI1, SNAI1/SNAIL1 and SMAD7. This chain is Protein PALS1, found in Pongo abelii (Sumatran orangutan).